Consider the following 860-residue polypeptide: DNA mismatch repair protein MutS (860 aa).

618–625 (GPNMGGKS) is a binding site for ATP.

The protein belongs to the DNA mismatch repair MutS family.

This protein is involved in the repair of mismatches in DNA. It is possible that it carries out the mismatch recognition step. This protein has a weak ATPase activity. In Shewanella piezotolerans (strain WP3 / JCM 13877), this protein is DNA mismatch repair protein MutS.